Reading from the N-terminus, the 191-residue chain is UMP-CMP kinase 2 (191 aa).

12 to 17 (GSGKGT) contacts ATP. Residues 32–62 (SAGDLLRAERQREGSEFGALIESHIKNGSIV) form an NMP region. Residues Arg-38, 60–62 (SIV), and 88–91 (GFPR) contribute to the a ribonucleoside 5'-phosphate site. Asn-95 serves as a coordination point for CMP. The tract at residues 128 to 136 (NRGQGRTDD) is LID. Residue Arg-129 participates in ATP binding. Residues Arg-133 and Arg-144 each contribute to the a ribonucleoside 5'-phosphate site. Arg-172 provides a ligand contact to ATP.

Belongs to the adenylate kinase family. UMP-CMP kinase subfamily. Monomer. Requires Mg(2+) as cofactor. In terms of tissue distribution, expressed in neurons and the pharynx.

The protein resides in the cytoplasm. The protein localises to the nucleus. It catalyses the reaction CMP + ATP = CDP + ADP. It carries out the reaction dCMP + ATP = dCDP + ADP. The enzyme catalyses UMP + ATP = UDP + ADP. Functionally, catalyzes the phosphorylation of pyrimidine nucleoside monophosphates at the expense of ATP. Plays an important role in de novo pyrimidine nucleotide biosynthesis. Has preference for UMP and CMP as phosphate acceptors. In Caenorhabditis elegans, this protein is UMP-CMP kinase 2.